The chain runs to 256 residues: DNA repair protein RecO (256 aa).

It belongs to the RecO family.

Its function is as follows. Involved in DNA repair and RecF pathway recombination. This chain is DNA repair protein RecO, found in Streptococcus equi subsp. zooepidemicus (strain MGCS10565).